The sequence spans 223 residues: Cutinase 4 (223 aa).

Residues 1–26 (MPLPLLPPLLLPLEALLDLALHLVDS) form the signal peptide. Cysteine 60 and cysteine 133 are oxidised to a cystine. The active-site Nucleophile is serine 144. An intrachain disulfide couples cysteine 187 to cysteine 194. Aspartate 191 is an active-site residue. Residue histidine 203 is the Proton donor/acceptor of the active site.

This sequence belongs to the cutinase family. The 2 disulfide bonds play a critical role in holding the catalytic residues in juxta-position; reduction of the disulfide bridges results in the complete inactivation of the enzyme.

Its subcellular location is the secreted. The catalysed reaction is cutin + H2O = cutin monomers.. Its function is as follows. Catalyzes the hydrolysis of complex carboxylic polyesters found in the cell wall of plants. Degrades cutin, a macromolecule that forms the structure of the plant cuticle. Also degrades suberin, a specialized macromolecule found in the cell wall of various plant tissues. In Emericella nidulans (strain FGSC A4 / ATCC 38163 / CBS 112.46 / NRRL 194 / M139) (Aspergillus nidulans), this protein is Cutinase 4.